We begin with the raw amino-acid sequence, 20 residues long: Elongation factor Tu (20 aa).

It belongs to the GTP-binding elongation factor family. EF-Tu/EF-1A subfamily. Monomer.

It is found in the cytoplasm. Its function is as follows. This protein promotes the GTP-dependent binding of aminoacyl-tRNA to the A-site of ribosomes during protein biosynthesis. This Mycoplasmopsis synoviae (Mycoplasma synoviae) protein is Elongation factor Tu (tuf).